The chain runs to 450 residues: UDP-N-acetylmuramoylalanine--D-glutamate ligase (450 aa).

Residue 119-125 coordinates ATP; sequence GSNGKTT.

The protein belongs to the MurCDEF family.

The protein resides in the cytoplasm. It carries out the reaction UDP-N-acetyl-alpha-D-muramoyl-L-alanine + D-glutamate + ATP = UDP-N-acetyl-alpha-D-muramoyl-L-alanyl-D-glutamate + ADP + phosphate + H(+). Its pathway is cell wall biogenesis; peptidoglycan biosynthesis. Cell wall formation. Catalyzes the addition of glutamate to the nucleotide precursor UDP-N-acetylmuramoyl-L-alanine (UMA). The polypeptide is UDP-N-acetylmuramoylalanine--D-glutamate ligase (Bacillus cereus (strain ATCC 10987 / NRS 248)).